Reading from the N-terminus, the 261-residue chain is Small ribosomal subunit protein uS2 (261 aa).

Serine 2 carries the N-acetylserine modification. The interval alanine 215–tryptophan 261 is disordered. The segment covering aspartate 223–tryptophan 244 has biased composition (acidic residues).

It belongs to the universal ribosomal protein uS2 family. In terms of assembly, component of the small ribosomal subunit. Mature ribosomes consist of a small (40S) and a large (60S) subunit. The 40S subunit contains about 33 different proteins and 1 molecule of RNA (18S). The 60S subunit contains about 49 different proteins and 3 molecules of RNA (25S, 5.8S and 5S). Interacts with RPS21.

Its subcellular location is the cytoplasm. Functionally, required for the assembly and/or stability of the 40S ribosomal subunit. Required for the processing of the 20S rRNA-precursor to mature 18S rRNA in a late step of the maturation of 40S ribosomal subunits. This Scheffersomyces stipitis (strain ATCC 58785 / CBS 6054 / NBRC 10063 / NRRL Y-11545) (Yeast) protein is Small ribosomal subunit protein uS2.